A 799-amino-acid chain; its full sequence is MSYKVNSSYPDSIPPTEQPYMASQYKQDLQSNIAMATNSEQQRQQQQQQQQQQQQWINQPTAENSDLKEKMNCKNTLNEYIFDFLTKSSLKNTAAAFAQDAHLDRDKGQNPVDGPKSKENNGNQNTFSKVVDTPQGFLYEWWQIFWDIFNTSSSRGGSEFAQQYYQLVLQEQRQEQIYRSLAVHAARLQHDAERRGEYSNEDIDPMHLAAMMLGNPMAPAVQMRNVNMNPIPIPMVGNPIVNNFSIPPYNNANPTTGATAVAPTAPPSGDFTNVGPTQNRSQNVTGWPVYNYPMQPTTENPVGNPCNNNTTNNTTNNKSPVNQPKSLKTMHSTDKPNNVPTSKSTRSRSATSKAKGKVKAGLVAKRRRKNNTATVSAGSTNACSPNITTPGSTTSEPAMVGSRVNKTPRSDIATNFRNQAIIFGEEDIYSNSKSSPSLDGASPSALASKQPTKVRKNTKKASTSAFPVESTNKLGGNSVVTGKKRSPPNTRVSRRKSTPSVILNADATKDENNMLRTFSNTIAPNIHSAPPTKTANSLPFPGINLGSFNKPAVSSPLSSVTESCFDPESGKIAGKNGPKRAVNSKVSASSPLSIATPRSGDAQKQRSSKVPGNVVIKPPHGFSTTNLNITLKNSKIITSQNNTVSQELPNGGNILEAQVGNDSRSSKGNRNTLSTPEEKKPSSNNQGYDFDALKNSSSLLFPNQAYASNNRTPNENSNVADETSASTNSGDNDNTLIQPSSNVGTTLGPQQTSTNENQNVHSQNLKFGNIGMVEDQGPDYDLNLLDTNENDFNFINWEG.

Positions 1–10 (MSYKVNSSYP) are enriched in polar residues. Disordered regions lie at residues 1 to 20 (MSYKVNSSYPDSIPPTEQPY), 37 to 68 (TNSEQQRQQQQQQQQQQQQWINQPTAENSDLK), 101 to 127 (AHLDRDKGQNPVDGPKSKENNGNQNTF), 255 to 406 (TTGA…RVNK), 431 to 503 (NSKS…SVIL), 568 to 622 (ESGK…PHGF), 644 to 691 (VSQE…YDFD), and 705 to 758 (AYAS…NENQ). A compositionally biased stretch (low complexity) spans 41–55 (QQRQQQQQQQQQQQQ). The LisH domain occupies 73–105 (CKNTLNEYIFDFLTKSSLKNTAAAFAQDAHLDR). Positions 270 to 285 (DFTNVGPTQNRSQNVT) are enriched in polar residues. Over residues 307 to 317 (NNNTTNNTTNN) the composition is skewed to low complexity. Residues 318–340 (KSPVNQPKSLKTMHSTDKPNNVP) are compositionally biased toward polar residues. The segment covering 341–353 (TSKSTRSRSATSK) has biased composition (low complexity). A compositionally biased stretch (basic residues) spans 354–370 (AKGKVKAGLVAKRRRKN). Polar residues-rich tracts occupy residues 371–396 (NTATVSAGSTNACSPNITTPGSTTSE) and 460–480 (KASTSAFPVESTNKLGGNSVV). Residues 482–497 (GKKRSPPNTRVSRRKS) show a composition bias toward basic residues. Composition is skewed to polar residues over residues 584 to 593 (SKVSASSPLS) and 660 to 675 (GNDSRSSKGNRNTLST).

Belongs to the FLO8 family.

It localises to the nucleus. Functionally, required for diploid filamentous growth, haploid invasive growth and flocculation. Putative transcriptional activator of FLO1. The polypeptide is Transcriptional activator FLO8 (FLO8) (Saccharomyces cerevisiae (strain ATCC 204508 / S288c) (Baker's yeast)).